The following is a 538-amino-acid chain: Telomerase Cajal body protein 1 (538 aa).

The disordered stretch occupies residues 1 to 53 (MKTSEERLVVPDSLSSDQAPAPVPQGSPVDENTDSEPVPQPCGGDDRSQVAAD). 2 positions are modified to phosphoserine: Ser27 and Ser87. The tract at residues 92–128 (EQELSENVSLPVEDTNQPELASGEDVEGVSEEPGPVD) is disordered. Over residues 113–128 (SGEDVEGVSEEPGPVD) the composition is skewed to acidic residues. WD repeat units follow at residues 154–194 (AHSE…YSAT), 210–255 (EGDT…LRAS), 260–301 (NHLD…RDCE), 311–352 (GQSG…ALLG), 353–393 (GHQG…HLLW), and 399–438 (VTTN…GDSS). 2 disordered regions span residues 471–491 (QRMF…GDLP) and 509–538 (CGGG…DGLI). Thr478 bears the Phosphothreonine mark. Position 480 is a phosphoserine (Ser480). Gly residues predominate over residues 529–538 (RAEGCGDGLI).

The protein belongs to the TCAB1 family. As to quaternary structure, component of the telomerase holoenzyme complex composed of one molecule of TERT, one molecule of WRAP53/TCAB1, two molecules of H/ACA ribonucleoprotein complex subunits DKC1, NOP10, NHP2 and GAR1, and a telomerase RNA template component (TERC). The telomerase holoenzyme complex is associated with TEP1, SMG6/EST1A and POT1. Interacts with the chaperonin-containing T-complex (TRiC) complex; which mediates the folding of WRAP53/TCAB1. Interacts with COIL. Interacts with SMN1. Interacts with RNF8. Interacts with histone H2AX. As to expression, preferentially expressed in testis.

The protein localises to the nucleus. The protein resides in the cajal body. It localises to the chromosome. Its subcellular location is the telomere. RNA chaperone that plays a key role in telomere maintenance and RNA localization to Cajal bodies. Specifically recognizes and binds the Cajal body box (CAB box) present in both small Cajal body RNAs (scaRNAs) and telomerase RNA template component (TERC). Essential component of the telomerase holoenzyme complex, a ribonucleoprotein complex essential for the replication of chromosome termini that elongates telomeres in most eukaryotes. In the telomerase holoenzyme complex, required to stimulate the catalytic activity of the complex. Acts by specifically binding the CAB box of the TERC RNA and controlling the folding of the CR4/CR5 region of the TERC RNA, a critical step for telomerase activity. In addition, also controls telomerase holoenzyme complex localization to Cajal body. During S phase, required for delivery of TERC to telomeres during S phase and for telomerase activity. In addition to its role in telomere maintenance, also required for Cajal body formation, probably by mediating localization of scaRNAs to Cajal bodies. Also plays a role in DNA repair: relocalizes to sites of DNA double-strand breaks in response to DNA damage and promotes the repair of DNA double-strand breaks. Acts by recruiting the ubiquitin ligase RNF8 to DNA breaks and promote both homologous recombination (HR) and non-homologous end joining (NHEJ). The polypeptide is Telomerase Cajal body protein 1 (Mesocricetus auratus (Golden hamster)).